A 94-amino-acid polypeptide reads, in one-letter code: Large ribosomal subunit protein uL23 (94 aa).

This sequence belongs to the universal ribosomal protein uL23 family. As to quaternary structure, part of the 50S ribosomal subunit. Contacts protein L29, and trigger factor when it is bound to the ribosome.

One of the early assembly proteins it binds 23S rRNA. One of the proteins that surrounds the polypeptide exit tunnel on the outside of the ribosome. Forms the main docking site for trigger factor binding to the ribosome. This Pelobacter propionicus (strain DSM 2379 / NBRC 103807 / OttBd1) protein is Large ribosomal subunit protein uL23.